Consider the following 292-residue polypeptide: uncharacterized protein (292 aa).

The next 5 membrane-spanning stretches (helical) occupy residues 57-77 (IISL…LTLI), 101-121 (VYVF…FNFM), 143-163 (LIYA…AVLI), 184-204 (VVIT…NFVL), and 271-291 (IAFL…DRGI).

This sequence belongs to the CbiQ family.

The protein resides in the cell membrane. This is an uncharacterized protein from Methanocaldococcus jannaschii (strain ATCC 43067 / DSM 2661 / JAL-1 / JCM 10045 / NBRC 100440) (Methanococcus jannaschii).